Consider the following 356-residue polypeptide: uncharacterized protein (356 aa).

Helical transmembrane passes span F2 to L22, E35 to F55, N76 to G96, I99 to L119, I124 to L144, and V151 to F171. A GGDEF domain is found at Q218–I353.

It localises to the cell membrane. This is an uncharacterized protein from Staphylococcus epidermidis (strain ATCC 35984 / DSM 28319 / BCRC 17069 / CCUG 31568 / BM 3577 / RP62A).